Here is a 200-residue protein sequence, read N- to C-terminus: Protein RISC-INTERACTING CLEARING 3'-5' EXORIBONUCLEASE 1 (200 aa).

3 oligomerization regions span residues 35-66 (SKILEDSVWNGNRSIVFDVYWDVKSVSTKSEW), 102-127 (KFVTFVGVQIQEDLALLKENHGIVIR), and 166-173 (DSIQSKWD).

This sequence belongs to the RICE family. Homohexamer with DnaQ-like exonuclease fold in a ring-shaped structure with a central cavity. Component of AGO1 and AGO10-centered RNA-induced silencing complexes (RISC). Interacts with and acts as a cofactor of AGO1 and AGO10. In terms of tissue distribution, ubiquitously expressed throughout development in germinating seeds, cotyledons, leaves and roots of young seedlings and adult plants, stems and inflorescence.

It localises to the cytoplasm. It catalyses the reaction Exonucleolytic cleavage in the 3'- to 5'-direction to yield nucleoside 5'-phosphates.. In terms of biological role, 3'-to-5' exoribonuclease (RNase) specifically targeting single-stranded RNAs. Triggers miRNA accumulation in RNA-induced silencing complex (RISC), composed of miRNAs and AGO proteins, by degrading uridylated cleavage fragments. Required during plant growth and development. This is Protein RISC-INTERACTING CLEARING 3'-5' EXORIBONUCLEASE 1 from Arabidopsis thaliana (Mouse-ear cress).